The following is a 298-amino-acid chain: Acetylglutamate kinase (298 aa).

Residues 69–70 (GG), Arg91, and Asn196 contribute to the substrate site.

It belongs to the acetylglutamate kinase family. ArgB subfamily.

The protein resides in the cytoplasm. It catalyses the reaction N-acetyl-L-glutamate + ATP = N-acetyl-L-glutamyl 5-phosphate + ADP. The protein operates within amino-acid biosynthesis; L-arginine biosynthesis; N(2)-acetyl-L-ornithine from L-glutamate: step 2/4. Its function is as follows. Catalyzes the ATP-dependent phosphorylation of N-acetyl-L-glutamate. In Granulibacter bethesdensis (strain ATCC BAA-1260 / CGDNIH1), this protein is Acetylglutamate kinase.